Reading from the N-terminus, the 269-residue chain is Protein MGF 110-1L (269 aa).

A topological domain (cytoplasmic) is located at residue Met1. Residues 1 to 145 form an A repeat; that stretch reads MLGLQIFTLL…YVRKRSLQTV (145 aa). Residues 2 to 18 form a helical membrane-spanning segment; it reads LGLQIFTLLSIPTLLYT. Residues 19-116 are Extracellular-facing; that stretch reads YELELLDLTR…HEWHEAVIRK (98 aa). Residue Asn75 is glycosylated (N-linked (GlcNAc...) asparagine; by host). The helical transmembrane segment at 117-137 threads the bilayer; that stretch reads WQKLLTYGFYLVGCVLVANYV. Over 138–144 the chain is Cytoplasmic; it reads RKRSLQT. The helical transmembrane segment at 145–165 threads the bilayer; the sequence is VMYLLVLLVIFFLLSQLMLYR. Residues 147-269 form a B repeat; that stretch reads YLLVLLVIFF…DNLMKKQDMM (123 aa). Topologically, residues 166–269 are extracellular; sequence ELEDKKHKIG…DNLMKKQDMM (104 aa).

This sequence belongs to the asfivirus MGF 110 family.

It is found in the host membrane. Plays a role in virus cell tropism, and may be required for efficient virus replication in macrophages. This African swine fever virus (isolate Tick/South Africa/Pretoriuskop Pr4/1996) (ASFV) protein is Protein MGF 110-1L.